A 178-amino-acid polypeptide reads, in one-letter code: Acireductone dioxygenase (178 aa).

4 residues coordinate Fe(2+): His-100, His-102, Glu-106, and His-145. Residues His-100, His-102, Glu-106, and His-145 each coordinate Ni(2+).

This sequence belongs to the acireductone dioxygenase (ARD) family. As to quaternary structure, monomer. Fe(2+) serves as cofactor. The cofactor is Ni(2+).

It carries out the reaction 1,2-dihydroxy-5-(methylsulfanyl)pent-1-en-3-one + O2 = 3-(methylsulfanyl)propanoate + CO + formate + 2 H(+). The catalysed reaction is 1,2-dihydroxy-5-(methylsulfanyl)pent-1-en-3-one + O2 = 4-methylsulfanyl-2-oxobutanoate + formate + 2 H(+). The protein operates within amino-acid biosynthesis; L-methionine biosynthesis via salvage pathway; L-methionine from S-methyl-5-thio-alpha-D-ribose 1-phosphate: step 5/6. In terms of biological role, catalyzes 2 different reactions between oxygen and the acireductone 1,2-dihydroxy-3-keto-5-methylthiopentene (DHK-MTPene) depending upon the metal bound in the active site. Fe-containing acireductone dioxygenase (Fe-ARD) produces formate and 2-keto-4-methylthiobutyrate (KMTB), the alpha-ketoacid precursor of methionine in the methionine recycle pathway. Ni-containing acireductone dioxygenase (Ni-ARD) produces methylthiopropionate, carbon monoxide and formate, and does not lie on the methionine recycle pathway. The chain is Acireductone dioxygenase (mtnD) from Bacillus subtilis (strain 168).